The sequence spans 102 residues: MTTATPLGDTTFFSLNMTTRGEDFLYKSSGAIVAAVVVVVIIIFTVVLILLKMYNRKMRTRRELEPKGPKPTAPSAVGPNSNGSQHPATVTFSPVDVQVETR.

Over 1–30 (MTTATPLGDTTFFSLNMTTRGEDFLYKSSG) the chain is Extracellular. The helical transmembrane segment at 31-51 (AIVAAVVVVVIIIFTVVLILL) threads the bilayer. At 52-102 (KMYNRKMRTRRELEPKGPKPTAPSAVGPNSNGSQHPATVTFSPVDVQVETR) the chain is on the cytoplasmic side. Residues 60–102 (TRRELEPKGPKPTAPSAVGPNSNGSQHPATVTFSPVDVQVETR) are disordered. Residues 78 to 92 (GPNSNGSQHPATVTF) are compositionally biased toward polar residues.

Glycosylated.

It localises to the cell membrane. Its function is as follows. Plays a role in myelin formation. The protein is Noncompact myelin-associated protein (NCMAP) of Homo sapiens (Human).